The sequence spans 217 residues: Small ribosomal subunit protein uS3 (217 aa).

The region spanning 38 to 106 (IRKYIDNALQ…KVHINVIEIK (69 aa)) is the KH type-2 domain.

This sequence belongs to the universal ribosomal protein uS3 family. Part of the 30S ribosomal subunit. Forms a tight complex with proteins S10 and S14.

Its function is as follows. Binds the lower part of the 30S subunit head. Binds mRNA in the 70S ribosome, positioning it for translation. In Staphylococcus saprophyticus subsp. saprophyticus (strain ATCC 15305 / DSM 20229 / NCIMB 8711 / NCTC 7292 / S-41), this protein is Small ribosomal subunit protein uS3.